We begin with the raw amino-acid sequence, 522 residues long: N-acetylgalactosamine-6-sulfatase (522 aa).

Residues methionine 1 to glycine 25 form the signal peptide. Residues proline 27 to glutamate 379 form a catalytic domain region. Residues aspartate 38, aspartate 39, and cysteine 78 each contribute to the Ca(2+) site. The Nucleophile role is filled by cysteine 78. Residue cysteine 78 is modified to 3-oxoalanine (Cys). Histidine 141 is a catalytic residue. Asparagine 203 is a glycosylation site (N-linked (GlcNAc...) asparagine). Ca(2+) contacts are provided by aspartate 288 and asparagine 289. A disulfide bridge links cysteine 308 with cysteine 419. N-linked (GlcNAc...) asparagine glycosylation is present at asparagine 423. 2 cysteine pairs are disulfide-bonded: cysteine 489/cysteine 518 and cysteine 501/cysteine 507.

The protein belongs to the sulfatase family. In terms of assembly, homodimer. Ca(2+) serves as cofactor. The conversion to 3-oxoalanine (also known as C-formylglycine, FGly), of a serine or cysteine residue in prokaryotes and of a cysteine residue in eukaryotes, is critical for catalytic activity.

The protein localises to the lysosome. It carries out the reaction Hydrolysis of the 6-sulfate groups of the N-acetyl-D-galactosamine 6-sulfate units of chondroitin sulfate and of the D-galactose 6-sulfate units of keratan sulfate.. In Sus scrofa (Pig), this protein is N-acetylgalactosamine-6-sulfatase (GALNS).